We begin with the raw amino-acid sequence, 240 residues long: Gas vesicle protein C (240 aa).

The span at 1 to 13 (MALKDKWQQDRIG) shows a compositional bias: basic and acidic residues. Residues 1 to 20 (MALKDKWQQDRIGRQQGVQE) are disordered. 5 consecutive repeats follow at residues 18 to 50 (VQER…RQGF), 51 to 83 (VTGV…LENF), 84 to 116 (IQQL…LSEF), 117 to 149 (REDL…LAIF), and 150 to 207 (RQTL…LQDY). The tract at residues 18–207 (VQERQQQVQT…GVFRAELQDY (190 aa)) is 5 X 33 AA tandem repeats.

Belongs to the gas vesicle GvpC family.

The protein resides in the gas vesicle. In terms of biological role, confers stability, involved in shaping gas vesicles, hollow, gas filled proteinaceous nanostructures. During planktonic growth they allow positioning of the organism at a favorable depth for light or nutrient acquisition. This is Gas vesicle protein C from Planktothrix agardhii (Oscillatoria agardhii).